The following is a 20-amino-acid chain: Collagenolytic protease 36 kDa A (20 aa).

Residues 1–20 (IVGGTEVTPGEIPYQLSLQD) enclose the Peptidase S1 domain. The tract at residues 1–20 (IVGGTEVTPGEIPYQLSLQD) is disordered.

This sequence belongs to the peptidase S1 family.

It carries out the reaction Hydrolysis of proteins, with broad specificity for peptide bonds. Native collagen is cleaved about 75% of the length of the molecule from the N-terminus. Low activity on small molecule substrates of both trypsin and chymotrypsin.. In terms of biological role, this enzyme is a serine protease capable of degrading the native triple helix of collagen. In Paralithodes camtschaticus (Red king crab), this protein is Collagenolytic protease 36 kDa A.